A 440-amino-acid polypeptide reads, in one-letter code: Serine/threonine-protein kinase toxin HipA (440 aa).

A Phosphoserine; by autocatalysis modification is found at Ser-150. Residues Ala-152–Lys-157, Lys-181, and Glu-234–Phe-236 each bind ATP. The active-site Proton acceptor is Asp-309. ATP contacts are provided by residues His-311–Asn-314 and Tyr-331–Asp-332. The DNA-binding element occupies Lys-379–Arg-382.

It belongs to the HipA Ser/Thr kinase family. As to quaternary structure, forms a HipA(2)HipB(2) heterotetramer which can interact with a single operator on DNA. When 2 operators are present each HipB dimer contacts 1 HipA molecule, which are brought together by the DNA bend and dimerize, blocking the HipA active site and inactivating its toxic activity. Mutations present in allele hipA7 (G22S and D291A) decrease the affinity of HipA for HipB. Autophosphorylates intermolecularly on Ser-150; phosphorylated form not seen to bind ATP and no longer has kinase activity.

The catalysed reaction is L-seryl-[protein] + ATP = O-phospho-L-seryl-[protein] + ADP + H(+). It catalyses the reaction L-threonyl-[protein] + ATP = O-phospho-L-threonyl-[protein] + ADP + H(+). Its activity is regulated as follows. Once phosphorylated no longer has kinase activity. In terms of biological role, toxic component of a type II toxin-antitoxin (TA) system, first identified by mutations that increase production of persister cells, a fraction of cells that are phenotypic variants not killed by antibiotics, which lead to multidrug tolerance. Persistence may be ultimately due to global remodeling of the persister cell's ribosomes. Phosphorylates Glu-tRNA-ligase (AC P04805, gltX, on 'Ser-239') in vivo. Phosphorylation of GltX prevents it from being charged, leading to an increase in uncharged tRNA(Glu). This induces amino acid starvation and the stringent response via RelA/SpoT and increased (p)ppGpp levels, which inhibits replication, transcription, translation and cell wall synthesis, reducing growth and leading to persistence and multidrug resistance. Once the level of HipA exceeds a threshold cells become dormant, and the length of dormancy is determined by how much HipA levels exceed the threshold. The hipA7 mutation (a double G22S D291A mutation) leads to increased generation of persister cells (cells that survive antibiotic treatment) probably by entering into a dormant state, as well as cold-sensitivity. Wild-type cells produce persisters at a frequency of 10(-6) to 10(-5) whereas hipA7 cells produce about 100-fold more persisters. hipA7 decreases the affinity for antitoxin HipB, leading to increased HipA levels and persistence; depending on the protein level, can be toxic enough to reduce cell growth or even kill cells. Generation of persister cells requires (p)ppGpp as cells lacking relA or relA/spoT generate fewer or no persister cells respectively compared to hipA7. The toxic effect of HipA is neutralized by its cognate antitoxin HipB. Also neutralized by overexpression of gltX. With HipB acts as a corepressor for transcription of the hipBA promoter; binding of HipA-HipB to DNA induces a 70 degree bend. This brings together and dimerizes 2 HipA molecules, which distorts the promoter region, preventing sigma-factor binding; additionally HipA and HipB would physically prevent RNA core polymerase from contacting the -35 promoter box. May play a role in biofilm formation. The sequence is that of Serine/threonine-protein kinase toxin HipA (hipA) from Escherichia coli (strain K12).